We begin with the raw amino-acid sequence, 823 residues long: Apoptosis-resistant E3 ubiquitin protein ligase 1 (823 aa).

The stretch at W64–F158 is one Filamin repeat. Residues P315–E345 form a disordered region. Positions S483 to T789 are interaction with SOCS2. The HECT domain maps to S483–L823. C790 serves as the catalytic Glycyl thioester intermediate.

In terms of assembly, interacts with SOCS2. Interacts (via HECT domain) with HTRA2, DIABLO/SMAC and SEPTIN4; in the cytoplasm following induction of apoptosis. In terms of processing, autoubiquitinated in vitro in the presence of E2 enzyme UBE2D1/UBCH5A. As to expression, detected in brain, testis, heart, liver, lung and kidney with very low levels in skeletal muscle and spleen.

It catalyses the reaction S-ubiquitinyl-[E2 ubiquitin-conjugating enzyme]-L-cysteine + [acceptor protein]-L-lysine = [E2 ubiquitin-conjugating enzyme]-L-cysteine + N(6)-ubiquitinyl-[acceptor protein]-L-lysine.. It participates in protein modification; protein ubiquitination. Functionally, E3 ubiquitin-protein ligase that catalyzes 'Lys-11'- or 'Lys-33'-linked polyubiquitin chains, with some preference for 'Lys-33' linkages. E3 ubiquitin-protein ligases accept ubiquitin from an E2 ubiquitin-conjugating enzyme in the form of a thioester and then directly transfers the ubiquitin to targeted substrates. Ubiquitinates SEPTIN4, DIABLO/SMAC and HTRA2 in vitro. Modulates pulmonary inflammation by targeting SOCS2 for ubiquitination and subsequent degradation by the proteasome. The chain is Apoptosis-resistant E3 ubiquitin protein ligase 1 (Arel1) from Mus musculus (Mouse).